Reading from the N-terminus, the 145-residue chain is Class I hydrophobin 1 (145 aa).

Residues 1 to 18 (MYASVIIYTLVALCGVMS) form the signal peptide. Intrachain disulfides connect Cys88/Cys118, Cys95/Cys112, Cys96/Cys106, and Cys119/Cys128. Asn108 carries an N-linked (GlcNAc...) asparagine glycan.

This sequence belongs to the fungal hydrophobin family. As to quaternary structure, self-assembles to form functional amyloid fibrils called rodlets. Self-assembly into fibrillar rodlets occurs spontaneously at hydrophobic:hydrophilic interfaces and the rodlets further associate laterally to form amphipathic monolayers.

It localises to the secreted. It is found in the cell wall. In terms of biological role, aerial growth, conidiation, and dispersal of filamentous fungi in the environment rely upon a capability of their secreting small amphipathic proteins called hydrophobins (HPBs) with low sequence identity. Class I can self-assemble into an outermost layer of rodlet bundles on aerial cell surfaces, conferring cellular hydrophobicity that supports fungal growth, development and dispersal; whereas Class II form highly ordered films at water-air interfaces through intermolecular interactions but contribute nothing to the rodlet structure. Hyd1 is a class I hydrophobin that is involved in plant root attachment and colonization, and that might also protect the growing hyphae from locally synthesized plant defense compounds during the first stages of cucumber interaction, allowing this opportunistic, non-pathogenic fungus to colonize the intercellular spaces of the plant root. The chain is Class I hydrophobin 1 from Trichoderma asperellum (Filamentous fungus).